The following is a 669-amino-acid chain: Armadillo repeat-containing protein gudu (669 aa).

Polar residues predominate over residues 1–10; the sequence is MIGTSSGTSH. The segment at 1 to 53 is disordered; it reads MIGTSSGTSHNRSRKKKEQCGSCPNRFSKDKRQVAAEDSDTTEVESSTDEEER. Over residues 37 to 51 the composition is skewed to acidic residues; that stretch reads EDSDTTEVESSTDEE. ARM repeat units lie at residues 100-139, 141-180, 240-279, 281-320, 322-365, 367-406, 408-447, 492-531, 574-613, and 615-654; these read QINQFAISDIGGLDVLVNILECSDTKCCLGALKVLSDITL, IDIRKTIVDLDGIPLIVDILNSSMKDLKTMAAETLANVCK, KHNMEQMRKSGIVPLMAQLLKSCHIDVVIPIMGTVRKCSS, PKFQLAITTEGMIPDIVSHLSSENTELKMEGSTAIYKCAF, GTTR…MCAV, DANVKVLDQLRTVNHLVALLNDECDEVLTNVTGAISECVR, QSNREQLRQAGGLPAMVSLLNSSHAPLLENLAKGLKECAE, DSAELVRSLVGAMELVVGLLKSKDIMVLSAVCAAIATIAQ, GNNTEELGRLRTVTPIVTYMTSDNPLVHRSTAMALEKLSM, and PQNCITMHQSGVVPFLLECIGSTNKELQLAAAGCLRNIRE.

Highly expressed in testis.

Functionally, important for spermatogenesis where it may have a role in sperm individualization. This chain is Armadillo repeat-containing protein gudu, found in Drosophila melanogaster (Fruit fly).